Reading from the N-terminus, the 164-residue chain is Interleukin-36 beta (164 aa).

The propeptide occupies 1-4; that stretch reads MNPQ.

The protein belongs to the IL-1 family. In terms of assembly, interacts with cargo receptor TMED10; the interaction mediates the translocation from the cytoplasm into the ERGIC (endoplasmic reticulum-Golgi intermediate compartment) and thereby secretion. N-terminal truncation leads to a dramatic enhancement of its activity (&gt;1000-fold). In terms of tissue distribution, expression at low levels in tonsil, bone marrow, heart, placenta, lung, testis and colon but not in any hematopoietic cell lines. Not detected in adipose tissue. Expressed at higher levels in psoriatic plaques than in symptomless psoriatic skin or healthy control skin. Increased levels are not detected in inflamed joint tissue.

It localises to the cytoplasm. The protein resides in the secreted. Cytokine that binds to and signals through the IL1RL2/IL-36R receptor which in turn activates NF-kappa-B and MAPK signaling pathways in target cells linked to a pro-inflammatory response. Part of the IL-36 signaling system that is thought to be present in epithelial barriers and to take part in local inflammatory response; similar to the IL-1 system with which it shares the coreceptor IL1RAP. Stimulates production of interleukin-6 and interleukin-8 in synovial fibrobasts, articular chondrocytes and mature adipocytes. Induces expression of a number of antimicrobial peptides including beta-defensins 4 and 103 as well as a number of matrix metalloproteases. Seems to be involved in skin inflammatory response by acting on keratinocytes, dendritic cells and indirectly on T-cells to drive tissue infiltration, cell maturation and cell proliferation. In cultured keratinocytes induces the expression of macrophage, T-cell, and neutrophil chemokines, such as CCL3, CCL4, CCL5, CCL2, CCL17, CCL22, CL20, CCL5, CCL2, CCL17, CCL22, CXCL8, CCL20 and CXCL1, and the production of pro-inflammatory cytokines such as TNF-alpha, IL-8 and IL-6. The sequence is that of Interleukin-36 beta from Homo sapiens (Human).